The sequence spans 243 residues: Ornithine decarboxylase antizyme 3 (243 aa).

S6, S9, and S12 each carry phosphoserine.

The protein belongs to the ODC antizyme family. Interacts with ODC1 and thereby sterically blocks ODC homodimerization. Interacts with AZIN2; this interaction disrupts the interaction between the antizyme and ODC1. Interacts with GGN. Isoform 2 interacts with PPP1R16A; Modulates PPP1CB activity. Testis-specific. Isoform 2 is expressed in outer dense fibers, fibrous sheath and the connecting piece of sperm.

The protein localises to the nucleus. Its subcellular location is the cytoplasm. It localises to the cell projection. The protein resides in the cilium. It is found in the flagellum. Ornithine decarboxylase (ODC) antizyme protein that negatively regulates ODC activity and intracellular polyamine biosynthesis and uptake in response to increased intracellular polyamine levels. Binds to ODC monomers, inhibiting the assembly of the functional ODC homodimers. Does not target the ODC monomers for degradation, which allows a protein synthesis-independent restoration of ODC activity. Stabilizes AZIN2 by interfering with its ubiquitination. Involved in the translocation of AZNI2 from ER-Golgi intermediate compartment (ERGIC) to the cytosol. Probably plays a key role in spermatogenesis by regulating the intracellular concentration of polyamines in haploid germ cells. Its function is as follows. Does not possess antizyme activity. Modulates PPP1CB activity through its interaction with PPP1R16A. This Rattus norvegicus (Rat) protein is Ornithine decarboxylase antizyme 3.